The primary structure comprises 97 residues: uncharacterized protein (97 aa).

This is an uncharacterized protein from Methanocaldococcus jannaschii (strain ATCC 43067 / DSM 2661 / JAL-1 / JCM 10045 / NBRC 100440) (Methanococcus jannaschii).